The sequence spans 395 residues: Multidrug resistance protein MdtL (395 aa).

A run of 12 helical transmembrane segments spans residues 4-24 (FLLC…MYLV), 42-62 (IAFS…GKIA), 69-89 (PVAI…SRAS), 93-113 (LFLS…VVAF), 131-151 (LLNG…HLIM), 158-178 (SLFY…LFIL), 217-237 (VSVI…VMGF), 247-267 (ALTA…LGLF), 271-291 (TLML…SLAH), 295-315 (VTLF…GVAM), 328-350 (VASS…LAAI), and 355-377 (AMNM…IFSV).

Belongs to the major facilitator superfamily. DHA1 family. MdtL (TC 2.A.1.2.22) subfamily.

The protein resides in the cell inner membrane. This is Multidrug resistance protein MdtL from Salmonella newport (strain SL254).